Reading from the N-terminus, the 63-residue chain is Actiflagelin (63 aa).

Cystine bridges form between Cys3–Cys24, Cys6–Cys11, Cys17–Cys39, Cys43–Cys55, and Cys56–Cys61. Pro63 is subject to Proline amide.

In terms of processing, contains 5 disulfide bonds. As to expression, expressed by the venom gland.

It is found in the secreted. Unknown. In vitro, this toxin activates sperm motility when tested on OF1 male mice. This chain is Actiflagelin, found in Walterinnesia aegyptia (Desert black snake).